The following is a 101-amino-acid chain: Small ribosomal subunit protein uS14 (101 aa).

This sequence belongs to the universal ribosomal protein uS14 family. In terms of assembly, part of the 30S ribosomal subunit. Contacts proteins S3 and S10.

Functionally, binds 16S rRNA, required for the assembly of 30S particles and may also be responsible for determining the conformation of the 16S rRNA at the A site. The chain is Small ribosomal subunit protein uS14 from Sphingopyxis alaskensis (strain DSM 13593 / LMG 18877 / RB2256) (Sphingomonas alaskensis).